Consider the following 344-residue polypeptide: Arginine N-succinyltransferase (344 aa).

Leu125 provides a ligand contact to succinyl-CoA. The Proton donor role is filled by His229.

It belongs to the arginine N-succinyltransferase family.

The catalysed reaction is succinyl-CoA + L-arginine = N(2)-succinyl-L-arginine + CoA + H(+). It participates in amino-acid degradation; L-arginine degradation via AST pathway; L-glutamate and succinate from L-arginine: step 1/5. Its function is as follows. Catalyzes the transfer of succinyl-CoA to arginine to produce N(2)-succinylarginine. In Shigella boydii serotype 18 (strain CDC 3083-94 / BS512), this protein is Arginine N-succinyltransferase.